Reading from the N-terminus, the 462-residue chain is Tubulin gamma-1 chain (462 aa).

142-148 (AGGTGSG) lines the GTP pocket.

This sequence belongs to the tubulin family.

It localises to the cytoplasm. It is found in the cytoskeleton. The protein resides in the microtubule organizing center. The protein localises to the centrosome. Functionally, tubulin is the major constituent of microtubules. The gamma chain is found at microtubule organizing centers (MTOC) such as the spindle poles or the centrosome, suggesting that it is involved in the minus-end nucleation of microtubule assembly. The sequence is that of Tubulin gamma-1 chain from Euplotes crassus.